The primary structure comprises 113 residues: Integration host factor subunit alpha (113 aa).

This sequence belongs to the bacterial histone-like protein family. Heterodimer of an alpha and a beta chain.

This protein is one of the two subunits of integration host factor, a specific DNA-binding protein that functions in genetic recombination as well as in transcriptional and translational control. The polypeptide is Integration host factor subunit alpha (Rhodopseudomonas palustris (strain BisA53)).